A 56-amino-acid polypeptide reads, in one-letter code: uncharacterized protein (56 aa).

2 helical membrane passes run 6 to 26 and 29 to 49; these read VILLAVMICLVSAITVFLLNG and VDFLDIGGTIIGCFLGIFVVV.

It is found in the cell membrane. This is an uncharacterized protein from Bacillus subtilis (strain 168).